A 1691-amino-acid chain; its full sequence is Protein TIC 214 (1691 aa).

The next 6 helical transmembrane spans lie at 19-39 (MLLGFYYGLLTTLPVGPSQIL), 60-80 (VLAQLITASSIYCSPIYLLLL), 84-104 (LLTIVAIPYTLLFCLVIKDFP), 123-143 (LFLISFFFQILNPIMLPNSVL), 158-178 (TVFMVSTFMGWLTGQAAFNFF), and 200-220 (FIYATFSIVSISYAVAYLGRA). The interval 819–839 (EKQHTLQRKHKEIGSKSRELK) is disordered.

Belongs to the TIC214 family. In terms of assembly, part of the Tic complex.

The protein resides in the plastid. It is found in the chloroplast inner membrane. In terms of biological role, involved in protein precursor import into chloroplasts. May be part of an intermediate translocation complex acting as a protein-conducting channel at the inner envelope. The polypeptide is Protein TIC 214 (Adiantum capillus-veneris (Maidenhair fern)).